A 1391-amino-acid chain; its full sequence is DNA-directed RNA polymerase subunit beta (1391 aa).

Belongs to the RNA polymerase beta chain family. In terms of assembly, the RNAP catalytic core consists of 2 alpha, 1 beta, 1 beta' and 1 omega subunit. When a sigma factor is associated with the core the holoenzyme is formed, which can initiate transcription.

The enzyme catalyses RNA(n) + a ribonucleoside 5'-triphosphate = RNA(n+1) + diphosphate. Its function is as follows. DNA-dependent RNA polymerase catalyzes the transcription of DNA into RNA using the four ribonucleoside triphosphates as substrates. This chain is DNA-directed RNA polymerase subunit beta, found in Granulibacter bethesdensis (strain ATCC BAA-1260 / CGDNIH1).